The sequence spans 82 residues: Cell division topological specificity factor (82 aa).

It belongs to the MinE family.

Its function is as follows. Prevents the cell division inhibition by proteins MinC and MinD at internal division sites while permitting inhibition at polar sites. This ensures cell division at the proper site by restricting the formation of a division septum at the midpoint of the long axis of the cell. This Buchnera aphidicola subsp. Cinara cedri (strain Cc) protein is Cell division topological specificity factor.